A 701-amino-acid chain; its full sequence is Protein UL29/UL28 (701 aa).

The tract at residues methionine 1–arginine 33 is disordered.

This sequence belongs to the herpesviridae US22 family. As to quaternary structure, interacts with UL38 and host HDAC1; these interactions are necessary for the HDAC1 interaction with UL38. Interacts with host MTA2.

It localises to the virion. Its subcellular location is the host nucleus. The protein resides in the host cytoplasm. Functionally, contributes to activation of immediate-early gene expression. In Homo sapiens (Human), this protein is Protein UL29/UL28 (UL29).